Reading from the N-terminus, the 706-residue chain is 1,4-alpha-glucan-branching enzyme (706 aa).

Residues Trp-96 and Lys-133 each contribute to the (1,4-alpha-D-glucosyl)n site. Residue Asp-358 is the Nucleophile of the active site. The Proton donor role is filled by Glu-419.

It belongs to the glycosyl hydrolase 13 family. GlgB subfamily. In terms of assembly, monomer.

The protein resides in the cytoplasm. The enzyme catalyses Transfers a segment of a (1-&gt;4)-alpha-D-glucan chain to a primary hydroxy group in a similar glucan chain.. The protein operates within glycan biosynthesis; glycogen biosynthesis. Functionally, glycogen-branching enzyme participates in the glycogen biosynthetic process along with glycogenin and glycogen synthase. Generates alpha-1,6-glucosidic branches from alpha-1,4-linked glucose chains, to increase solubility of the glycogen polymer. The sequence is that of 1,4-alpha-glucan-branching enzyme (GLC3) from Candida glabrata (strain ATCC 2001 / BCRC 20586 / JCM 3761 / NBRC 0622 / NRRL Y-65 / CBS 138) (Yeast).